Consider the following 165-residue polypeptide: Large ribosomal subunit protein uL10 (165 aa).

The protein belongs to the universal ribosomal protein uL10 family. In terms of assembly, part of the ribosomal stalk of the 50S ribosomal subunit. The N-terminus interacts with L11 and the large rRNA to form the base of the stalk. The C-terminus forms an elongated spine to which L12 dimers bind in a sequential fashion forming a multimeric L10(L12)X complex.

Functionally, forms part of the ribosomal stalk, playing a central role in the interaction of the ribosome with GTP-bound translation factors. The chain is Large ribosomal subunit protein uL10 from Dechloromonas aromatica (strain RCB).